The sequence spans 59 residues: Small ribosomal subunit protein bS21 (59 aa).

Residues 34-59 (KHEHYEKPSVKRKKKSEAARRRKRSF) are disordered. A compositionally biased stretch (basic residues) spans 43-59 (VKRKKKSEAARRRKRSF).

It belongs to the bacterial ribosomal protein bS21 family.

The protein is Small ribosomal subunit protein bS21 of Desulforudis audaxviator (strain MP104C).